Here is a 141-residue protein sequence, read N- to C-terminus: Small ribosomal subunit protein bS6 (141 aa).

The interval 96 to 141 (VTGPSAMMKTVEREEFRKASQAGNQTTAPAASPADHAAAPASADRS) is disordered. A compositionally biased stretch (low complexity) spans 123–141 (APAASPADHAAAPASADRS).

The protein belongs to the bacterial ribosomal protein bS6 family.

Its function is as follows. Binds together with bS18 to 16S ribosomal RNA. The sequence is that of Small ribosomal subunit protein bS6 from Verminephrobacter eiseniae (strain EF01-2).